The chain runs to 194 residues: Der GTPase-activating protein YihI (194 aa).

Positions 1–81 (MSRSKKTRRI…AKVKKDPRVG (81 aa)) are disordered. Composition is skewed to basic and acidic residues over residues 9–23 (RISD…DKKP) and 36–47 (TRYELDVQAREE). A compositionally biased stretch (polar residues) spans 59-70 (GSRNVITEQKTA).

The protein belongs to the YihI family. In terms of assembly, interacts with Der.

A GTPase-activating protein (GAP) that modifies Der/EngA GTPase function. May play a role in ribosome biogenesis. The sequence is that of Der GTPase-activating protein YihI from Haemophilus ducreyi (strain 35000HP / ATCC 700724).